A 254-amino-acid chain; its full sequence is Thiazole synthase (254 aa).

The active-site Schiff-base intermediate with DXP is the K95. Residues G156, 182-183 (AG), and 204-205 (NT) contribute to the 1-deoxy-D-xylulose 5-phosphate site.

It belongs to the ThiG family. As to quaternary structure, homotetramer. Forms heterodimers with either ThiH or ThiS.

The protein resides in the cytoplasm. It catalyses the reaction [ThiS sulfur-carrier protein]-C-terminal-Gly-aminoethanethioate + 2-iminoacetate + 1-deoxy-D-xylulose 5-phosphate = [ThiS sulfur-carrier protein]-C-terminal Gly-Gly + 2-[(2R,5Z)-2-carboxy-4-methylthiazol-5(2H)-ylidene]ethyl phosphate + 2 H2O + H(+). It functions in the pathway cofactor biosynthesis; thiamine diphosphate biosynthesis. Its function is as follows. Catalyzes the rearrangement of 1-deoxy-D-xylulose 5-phosphate (DXP) to produce the thiazole phosphate moiety of thiamine. Sulfur is provided by the thiocarboxylate moiety of the carrier protein ThiS. In vitro, sulfur can be provided by H(2)S. The sequence is that of Thiazole synthase from Shewanella baltica (strain OS223).